A 397-amino-acid polypeptide reads, in one-letter code: Putative teichuronic acid biosynthesis glycosyltransferase TuaH (397 aa).

It belongs to the glycosyltransferase group 1 family.

It participates in cell wall biogenesis; teichuronic acid biosynthesis. The protein is Putative teichuronic acid biosynthesis glycosyltransferase TuaH (tuaH) of Bacillus subtilis (strain 168).